The sequence spans 416 residues: Serine hydroxymethyltransferase (416 aa).

(6S)-5,6,7,8-tetrahydrofolate is bound by residues L117 and 121–123 (GHL). The residue at position 226 (K226) is an N6-(pyridoxal phosphate)lysine. (6S)-5,6,7,8-tetrahydrofolate is bound at residue E242.

It belongs to the SHMT family. In terms of assembly, homodimer. Requires pyridoxal 5'-phosphate as cofactor.

It is found in the cytoplasm. It catalyses the reaction (6R)-5,10-methylene-5,6,7,8-tetrahydrofolate + glycine + H2O = (6S)-5,6,7,8-tetrahydrofolate + L-serine. Its pathway is one-carbon metabolism; tetrahydrofolate interconversion. It participates in amino-acid biosynthesis; glycine biosynthesis; glycine from L-serine: step 1/1. Catalyzes the reversible interconversion of serine and glycine with tetrahydrofolate (THF) serving as the one-carbon carrier. This reaction serves as the major source of one-carbon groups required for the biosynthesis of purines, thymidylate, methionine, and other important biomolecules. Also exhibits THF-independent aldolase activity toward beta-hydroxyamino acids, producing glycine and aldehydes, via a retro-aldol mechanism. This chain is Serine hydroxymethyltransferase, found in Endomicrobium trichonymphae.